Consider the following 1471-residue polypeptide: ABC multidrug transporter F (1471 aa).

Positions 1–19 (MALNSTDNRWSTGEDTPSE) are enriched in polar residues. Residues 1 to 40 (MALNSTDNRWSTGEDTPSEAQLPDGEERLDAAPDEKVTAE) are disordered. N-linked (GlcNAc...) asparagine glycosylation occurs at Asn-4. Basic and acidic residues predominate over residues 25–40 (GEERLDAAPDEKVTAE). 2 N-linked (GlcNAc...) asparagine glycosylation sites follow: Asn-71 and Asn-311. Positions 133–387 (LKVPTMVRQA…FEQLGFQCPE (255 aa)) constitute an ABC transporter 1 domain. A helical transmembrane segment spans residues 498 to 518 (VTLAMLIGNFFEALIIASIFY). Asn-519 carries an N-linked (GlcNAc...) asparagine glycan. The next 5 helical transmembrane spans lie at 532–552 (ALLF…ILTL), 578–598 (FIMS…TLYF), 607–627 (GPFF…SMFF), 641–661 (LAPS…TIPV), and 751–771 (IIIA…ELVA). The interval 791 to 819 (RAKQGQRDEEQPSASAVPSEKYSEAPTPV) is disordered. One can recognise an ABC transporter 2 domain in the interval 829–1071 (FHWEDVCYDV…TLMDYFVRNG (243 aa)). Asn-842 carries an N-linked (GlcNAc...) asparagine glycan. 865-872 (GVSGAGKT) serves as a coordination point for ATP. The next 5 helical transmembrane spans lie at 1167 to 1187 (YLYS…FSFF), 1201 to 1221 (FGVF…IPTF), 1252 to 1272 (FAWN…PVGL), 1288 to 1308 (LVFL…HLLI), and 1326 to 1346 (IMMY…GFWI). Asn-1386, Asn-1422, and Asn-1429 each carry an N-linked (GlcNAc...) asparagine glycan. The chain crosses the membrane as a helical span at residues 1441–1461 (FGLLWVYVAVNTFGAVFLYWL).

The protein belongs to the ABC transporter superfamily. ABCG family. PDR (TC 3.A.1.205) subfamily.

The protein resides in the cell membrane. The enzyme catalyses fluconazole(in) + ATP + H2O = fluconazole(out) + ADP + phosphate + H(+). It catalyses the reaction itraconazole(in) + ATP + H2O = itraconazole(out) + ADP + phosphate + H(+). With respect to regulation, the efflux inhibitor FK506 impairs the transport activity. Functionally, pleiotropic ABC efflux transporter that shows a strong substrate specificity for the azole class of drugs such as lotrimazole (CLT), fluconazole (FLC), itraconazole (ITC), ketoconazole (KTC), posaconazole (POS), econazole (ECON), metconazole (MET), miconazole (MCZ), prochloraz (PCLZ), and tebuconazole (TEBZ). The sequence is that of ABC multidrug transporter F from Aspergillus fumigatus (strain ATCC MYA-4609 / CBS 101355 / FGSC A1100 / Af293) (Neosartorya fumigata).